The sequence spans 308 residues: Acetylglutamate kinase (308 aa).

Substrate-binding positions include Gly73–Gly74, Arg95, and Asn194.

It belongs to the acetylglutamate kinase family. ArgB subfamily.

The protein resides in the cytoplasm. The catalysed reaction is N-acetyl-L-glutamate + ATP = N-acetyl-L-glutamyl 5-phosphate + ADP. It functions in the pathway amino-acid biosynthesis; L-arginine biosynthesis; N(2)-acetyl-L-ornithine from L-glutamate: step 2/4. Its function is as follows. Catalyzes the ATP-dependent phosphorylation of N-acetyl-L-glutamate. In Rhodococcus jostii (strain RHA1), this protein is Acetylglutamate kinase.